Reading from the N-terminus, the 584-residue chain is Probable lysosomal cobalamin transporter (584 aa).

10 helical membrane passes run 8–28, 46–66, 93–113, 144–164, 189–209, 313–333, 350–370, 376–396, 421–441, and 509–529; these read LIWIVYAIVVGILSIVASTFV, IFTLTALLATVLLLPVDVALV, TVVYYFLYSLDAVLCLLIVPF, TLVFILLTIILFLVGFFVPVA, ALTFALGLLIVMGIIVYVIYS, LLGGLLLLAISVMIWISMLLT, ILGKINIINPVNWVLVEAASV, VIFIVLVLHLFTSSVVGIATI, ATVMLTLITLALNYSISMIVV, and GIVDFWAQFVFLGFSLIVLLI.

This sequence belongs to the LIMR family. LMBRD1 subfamily.

Its subcellular location is the lysosome membrane. Its function is as follows. Probable lysosomal cobalamin transporter. Required to export cobalamin from lysosomes allowing its conversion to cofactors. In Coccidioides immitis (strain RS) (Valley fever fungus), this protein is Probable lysosomal cobalamin transporter.